Here is a 536-residue protein sequence, read N- to C-terminus: Maintenance of mitochondrial morphology protein 1 (536 aa).

The Lumenal portion of the chain corresponds to 1-25 (MAGPSNQTQPPPPVLTQPSLSFTQG). Residues 26–46 (LLVGQLSVVLLIGAFIKFFIF) traverse the membrane as a helical segment. The Cytoplasmic portion of the chain corresponds to 47-536 (GEAPPHPSRN…GSMPDPVVVT (490 aa)). Disordered regions lie at residues 52–135 (HPSR…SHQP), 275–331 (GPGT…ATAA), 416–467 (GRTG…GGSM), and 505–536 (YGGA…VVVT). Composition is skewed to polar residues over residues 69-81 (YSLN…SSPR), 88-105 (STSN…NTRS), and 112-121 (YSATPTNPTS). Over residues 122-132 (KHSRSRPHHSS) the composition is skewed to basic residues. The region spanning 134–409 (QPESLDWFNV…EPRVQVVGLP (276 aa)) is the SMP-LTD domain. A compositionally biased stretch (low complexity) spans 321 to 331 (TNTNTAGATAA). Gly residues-rich tracts occupy residues 442-467 (TAGG…GGSM) and 507-517 (GAQGGGGGGGR).

Belongs to the MMM1 family. Homodimer. Component of the ER-mitochondria encounter structure (ERMES) or MDM complex, composed of MMM1, MDM10, MDM12 and MDM34. An MMM1 homodimer associates with one molecule of MDM12 on each side in a pairwise head-to-tail manner, and the SMP-LTD domains of MMM1 and MDM12 generate a continuous hydrophobic tunnel for phospholipid trafficking.

Its subcellular location is the endoplasmic reticulum membrane. Its function is as follows. Component of the ERMES/MDM complex, which serves as a molecular tether to connect the endoplasmic reticulum (ER) and mitochondria. Components of this complex are involved in the control of mitochondrial shape and protein biogenesis, and function in nonvesicular lipid trafficking between the ER and mitochondria. The MDM12-MMM1 subcomplex functions in the major beta-barrel assembly pathway that is responsible for biogenesis of all outer membrane beta-barrel proteins, and acts in a late step after the SAM complex. The MDM10-MDM12-MMM1 subcomplex further acts in the TOM40-specific pathway after the action of the MDM12-MMM1 complex. Essential for establishing and maintaining the structure of mitochondria and maintenance of mtDNA nucleoids. This is Maintenance of mitochondrial morphology protein 1 from Ajellomyces dermatitidis (strain ER-3 / ATCC MYA-2586) (Blastomyces dermatitidis).